Reading from the N-terminus, the 353-residue chain is UDP-N-acetylglucosamine--N-acetylmuramyl-(pentapeptide) pyrophosphoryl-undecaprenol N-acetylglucosamine transferase (353 aa).

Residues 10-12 (TGG), asparagine 124, serine 183, and glutamine 283 each bind UDP-N-acetyl-alpha-D-glucosamine.

This sequence belongs to the glycosyltransferase 28 family. MurG subfamily.

The protein resides in the cell inner membrane. The enzyme catalyses di-trans,octa-cis-undecaprenyl diphospho-N-acetyl-alpha-D-muramoyl-L-alanyl-D-glutamyl-meso-2,6-diaminopimeloyl-D-alanyl-D-alanine + UDP-N-acetyl-alpha-D-glucosamine = di-trans,octa-cis-undecaprenyl diphospho-[N-acetyl-alpha-D-glucosaminyl-(1-&gt;4)]-N-acetyl-alpha-D-muramoyl-L-alanyl-D-glutamyl-meso-2,6-diaminopimeloyl-D-alanyl-D-alanine + UDP + H(+). Its pathway is cell wall biogenesis; peptidoglycan biosynthesis. In terms of biological role, cell wall formation. Catalyzes the transfer of a GlcNAc subunit on undecaprenyl-pyrophosphoryl-MurNAc-pentapeptide (lipid intermediate I) to form undecaprenyl-pyrophosphoryl-MurNAc-(pentapeptide)GlcNAc (lipid intermediate II). The polypeptide is UDP-N-acetylglucosamine--N-acetylmuramyl-(pentapeptide) pyrophosphoryl-undecaprenol N-acetylglucosamine transferase (Helicobacter pylori (strain P12)).